A 148-amino-acid polypeptide reads, in one-letter code: SsrA-binding protein (148 aa).

The tract at residues 123–148 (KLHDKRETEKKRDWEREKARIMRSAT) is disordered. Positions 126-142 (DKRETEKKRDWEREKAR) are enriched in basic and acidic residues.

Belongs to the SmpB family.

It localises to the cytoplasm. Required for rescue of stalled ribosomes mediated by trans-translation. Binds to transfer-messenger RNA (tmRNA), required for stable association of tmRNA with ribosomes. tmRNA and SmpB together mimic tRNA shape, replacing the anticodon stem-loop with SmpB. tmRNA is encoded by the ssrA gene; the 2 termini fold to resemble tRNA(Ala) and it encodes a 'tag peptide', a short internal open reading frame. During trans-translation Ala-aminoacylated tmRNA acts like a tRNA, entering the A-site of stalled ribosomes, displacing the stalled mRNA. The ribosome then switches to translate the ORF on the tmRNA; the nascent peptide is terminated with the 'tag peptide' encoded by the tmRNA and targeted for degradation. The ribosome is freed to recommence translation, which seems to be the essential function of trans-translation. The polypeptide is SsrA-binding protein (Burkholderia thailandensis (strain ATCC 700388 / DSM 13276 / CCUG 48851 / CIP 106301 / E264)).